The primary structure comprises 180 residues: ATP synthase subunit delta, chloroplastic (180 aa).

The protein belongs to the ATPase delta chain family. In terms of assembly, F-type ATPases have 2 components, F(1) - the catalytic core - and F(0) - the membrane proton channel. F(1) has five subunits: alpha(3), beta(3), gamma(1), delta(1), epsilon(1). CF(0) has four main subunits: a(1), b(1), b'(1) and c(10-14). The alpha and beta chains form an alternating ring which encloses part of the gamma chain. F(1) is attached to F(0) by a central stalk formed by the gamma and epsilon chains, while a peripheral stalk is formed by the delta, b and b' chains.

It is found in the plastid. Its subcellular location is the chloroplast thylakoid membrane. Its function is as follows. F(1)F(0) ATP synthase produces ATP from ADP in the presence of a proton or sodium gradient. F-type ATPases consist of two structural domains, F(1) containing the extramembraneous catalytic core and F(0) containing the membrane proton channel, linked together by a central stalk and a peripheral stalk. During catalysis, ATP synthesis in the catalytic domain of F(1) is coupled via a rotary mechanism of the central stalk subunits to proton translocation. Functionally, this protein is part of the stalk that links CF(0) to CF(1). It either transmits conformational changes from CF(0) to CF(1) or is implicated in proton conduction. This is ATP synthase subunit delta, chloroplastic from Emiliania huxleyi (Coccolithophore).